The sequence spans 580 residues: DNA mismatch repair protein MutL (580 aa).

This sequence belongs to the DNA mismatch repair MutL/HexB family.

In terms of biological role, this protein is involved in the repair of mismatches in DNA. It is required for dam-dependent methyl-directed DNA mismatch repair. May act as a 'molecular matchmaker', a protein that promotes the formation of a stable complex between two or more DNA-binding proteins in an ATP-dependent manner without itself being part of a final effector complex. This chain is DNA mismatch repair protein MutL, found in Chlamydia caviae (strain ATCC VR-813 / DSM 19441 / 03DC25 / GPIC) (Chlamydophila caviae).